Consider the following 186-residue polypeptide: Protein GrpE (186 aa).

Residues 1–22 (MSDSNKEKKKKFADMVSKRKGD) show a composition bias toward basic and acidic residues. Residues 1–35 (MSDSNKEKKKKFADMVSKRKGDDQEDQQTGDLSEE) form a disordered region. Positions 23 to 34 (DQEDQQTGDLSE) are enriched in acidic residues.

It belongs to the GrpE family. In terms of assembly, homodimer.

It localises to the cytoplasm. Functionally, participates actively in the response to hyperosmotic and heat shock by preventing the aggregation of stress-denatured proteins, in association with DnaK and GrpE. It is the nucleotide exchange factor for DnaK and may function as a thermosensor. Unfolded proteins bind initially to DnaJ; upon interaction with the DnaJ-bound protein, DnaK hydrolyzes its bound ATP, resulting in the formation of a stable complex. GrpE releases ADP from DnaK; ATP binding to DnaK triggers the release of the substrate protein, thus completing the reaction cycle. Several rounds of ATP-dependent interactions between DnaJ, DnaK and GrpE are required for fully efficient folding. The protein is Protein GrpE of Wolbachia pipientis subsp. Culex pipiens (strain wPip).